The sequence spans 194 residues: NADH-quinone oxidoreductase subunit B (194 aa).

Cysteine 73, cysteine 74, cysteine 138, and cysteine 168 together coordinate [4Fe-4S] cluster.

The protein belongs to the complex I 20 kDa subunit family. As to quaternary structure, NDH-1 is composed of 14 different subunits. Subunits NuoB, C, D, E, F, and G constitute the peripheral sector of the complex. It depends on [4Fe-4S] cluster as a cofactor.

It localises to the cell inner membrane. The enzyme catalyses a quinone + NADH + 5 H(+)(in) = a quinol + NAD(+) + 4 H(+)(out). Its function is as follows. NDH-1 shuttles electrons from NADH, via FMN and iron-sulfur (Fe-S) centers, to quinones in the respiratory chain. The immediate electron acceptor for the enzyme in this species is believed to be ubiquinone. Couples the redox reaction to proton translocation (for every two electrons transferred, four hydrogen ions are translocated across the cytoplasmic membrane), and thus conserves the redox energy in a proton gradient. In Bradyrhizobium sp. (strain BTAi1 / ATCC BAA-1182), this protein is NADH-quinone oxidoreductase subunit B.